The sequence spans 299 residues: tRNA dimethylallyltransferase (299 aa).

8–15 contacts ATP; it reads GPTASGKT. A substrate-binding site is contributed by 10–15; that stretch reads TASGKT. An interaction with substrate tRNA region spans residues 33 to 36; it reads DSQQ.

Belongs to the IPP transferase family. In terms of assembly, monomer. Mg(2+) is required as a cofactor.

It carries out the reaction adenosine(37) in tRNA + dimethylallyl diphosphate = N(6)-dimethylallyladenosine(37) in tRNA + diphosphate. In terms of biological role, catalyzes the transfer of a dimethylallyl group onto the adenine at position 37 in tRNAs that read codons beginning with uridine, leading to the formation of N6-(dimethylallyl)adenosine (i(6)A). The protein is tRNA dimethylallyltransferase of Anaeromyxobacter dehalogenans (strain 2CP-C).